Reading from the N-terminus, the 231-residue chain is Histidine biosynthesis bifunctional protein HisIE (231 aa).

The segment at 1 to 130 is phosphoribosyl-AMP cyclohydrolase; the sequence is MQDVFRQIDW…QKYPIGVYHI (130 aa). The tract at residues 131-231 is phosphoribosyl-ATP pyrophosphohydrolase; sequence LDDLYHIIEQ…GIEEKASRKH (101 aa).

The protein in the N-terminal section; belongs to the PRA-CH family. It in the C-terminal section; belongs to the PRA-PH family.

The protein resides in the cytoplasm. The catalysed reaction is 1-(5-phospho-beta-D-ribosyl)-ATP + H2O = 1-(5-phospho-beta-D-ribosyl)-5'-AMP + diphosphate + H(+). It carries out the reaction 1-(5-phospho-beta-D-ribosyl)-5'-AMP + H2O = 1-(5-phospho-beta-D-ribosyl)-5-[(5-phospho-beta-D-ribosylamino)methylideneamino]imidazole-4-carboxamide. It functions in the pathway amino-acid biosynthesis; L-histidine biosynthesis; L-histidine from 5-phospho-alpha-D-ribose 1-diphosphate: step 2/9. It participates in amino-acid biosynthesis; L-histidine biosynthesis; L-histidine from 5-phospho-alpha-D-ribose 1-diphosphate: step 3/9. This Helicobacter hepaticus (strain ATCC 51449 / 3B1) protein is Histidine biosynthesis bifunctional protein HisIE.